A 1474-amino-acid polypeptide reads, in one-letter code: Alpha-2-macroglobulin (1474 aa).

The first 23 residues, 1–23 (MGKNKLLHPSLVLLLLVLLPTDA), serve as a signal peptide directing secretion. Cys48 and Cys86 form a disulfide bridge. N-linked (GlcNAc...) asparagine glycans are attached at residues Asn55, Asn70, and Asn247. Intrachain disulfides connect Cys251/Cys299 and Cys269/Cys287. N-linked (GlcNAc...) asparagine glycans are attached at residues Asn396 and Asn410. Intrachain disulfides connect Cys470-Cys563, Cys595-Cys771, Cys642-Cys689, Cys821-Cys849, Cys847-Cys883, Cys921-Cys1321, Cys1079-Cys1127, and Cys1352-Cys1467. A bait region region spans residues 690–728 (PQLQQYEMHGPEGLRVGFYESDVMGRGHARLVHAEEPPT). Isoglutamyl lysine isopeptide (Gln-Lys) (interchain with K-? in other proteins) cross-links involve residues Gln693 and Gln694. Inhibitory regions lie at residues 704 to 709 (RVGFYE), 719 to 723 (RLVHA), and 730 to 735 (TVRKYF). Asn869 carries N-linked (GlcNAc...) asparagine glycosylation. Positions 972–975 (CGEQ) form a cross-link, isoglutamyl cysteine thioester (Cys-Gln). A glycan (N-linked (GlcNAc...) asparagine) is linked at Asn991. Asn1424 carries N-linked (GlcNAc...) asparagine glycosylation.

It belongs to the protease inhibitor I39 (alpha-2-macroglobulin) family. As to quaternary structure, homotetramer; disulfide-linked. In terms of tissue distribution, plasma.

The protein localises to the secreted. In terms of biological role, is able to inhibit all four classes of proteinases by a unique 'trapping' mechanism. This protein has a peptide stretch, called the 'bait region' which contains specific cleavage sites for different proteinases. When a proteinase cleaves the bait region, a conformational change is induced in the protein which traps the proteinase. The entrapped enzyme remains active against low molecular weight substrates (activity against high molecular weight substrates is greatly reduced). Following cleavage in the bait region a thioester bond is hydrolyzed and mediates the covalent binding of the protein to the proteinase. The sequence is that of Alpha-2-macroglobulin (A2M) from Pongo abelii (Sumatran orangutan).